A 795-amino-acid polypeptide reads, in one-letter code: Phenylalanine--tRNA ligase beta subunit (795 aa).

One can recognise a tRNA-binding domain in the interval 39-148 (AGTFNGVKVG…IDAPIGMDFR (110 aa)). The B5 domain maps to 401–476 (PKPNKVALRR…RIYGYDNIPN (76 aa)). Mg(2+)-binding residues include D454, D460, E463, and E464. The 94-residue stretch at 701–794 (SKFPANRRDI…VSEKFGASLR (94 aa)) folds into the FDX-ACB domain.

This sequence belongs to the phenylalanyl-tRNA synthetase beta subunit family. Type 1 subfamily. As to quaternary structure, tetramer of two alpha and two beta subunits. Mg(2+) serves as cofactor.

The protein localises to the cytoplasm. The catalysed reaction is tRNA(Phe) + L-phenylalanine + ATP = L-phenylalanyl-tRNA(Phe) + AMP + diphosphate + H(+). The protein is Phenylalanine--tRNA ligase beta subunit of Vibrio vulnificus (strain YJ016).